Reading from the N-terminus, the 339-residue chain is NADPH dehydrogenase (339 aa).

An FMN-binding site is contributed by 24–27 (SPMC). Substrate is bound at residue Y29. 2 residues coordinate FMN: A61 and Q103. 165–168 (HGAH) is a substrate binding site. Residues R216 and 308 to 309 (AR) each bind FMN.

Belongs to the NADH:flavin oxidoreductase/NADH oxidase family. NamA subfamily. As to quaternary structure, homotetramer. The cofactor is FMN.

It catalyses the reaction A + NADPH + H(+) = AH2 + NADP(+). Catalyzes the reduction of the double bond of an array of alpha,beta-unsaturated aldehydes and ketones. It also reduces the nitro group of nitroester and nitroaromatic compounds. It could have a role in detoxification processes. The sequence is that of NADPH dehydrogenase from Bacillus licheniformis (strain ATCC 14580 / DSM 13 / JCM 2505 / CCUG 7422 / NBRC 12200 / NCIMB 9375 / NCTC 10341 / NRRL NRS-1264 / Gibson 46).